The following is a 477-amino-acid chain: Secreted RxLR effector protein 102 (477 aa).

A signal peptide spans Met1 to Ala20. The RxLR-dEER motif lies at Arg48 to Arg65. Disordered regions lie at residues Ser326–Gly345, Ile351–Ile370, Ser376–Arg401, and Pro433–Ser455.

This sequence belongs to the RxLR effector family.

It localises to the secreted. Its subcellular location is the host nucleus. Functionally, secreted effector that acts as an elicitor that induces cell death in host plant cells. The polypeptide is Secreted RxLR effector protein 102 (Plasmopara viticola (Downy mildew of grapevine)).